Reading from the N-terminus, the 235-residue chain is Putative cobalt transport protein CbiM 2 (235 aa).

Helical transmembrane passes span 8 to 28 (LPAIWCIVWFVVSIPVVAYGV), 40 to 60 (GILPVLAVAGAFIFVLSSLKM), 74 to 94 (GIGAIIFGPAITAVLSTIVLI), 107 to 127 (TLGANVFSMGIVGPIVAYLIY), 135 to 155 (LNFYLIVFLAATLGDWATYIV), 160 to 180 (LALAFPAGDILTFGGFFSSFS), and 185 to 205 (IFAITQVPLAIVEGAVSALLF).

This sequence belongs to the CbiM family. In terms of assembly, forms an energy-coupling factor (ECF) transporter complex composed of an ATP-binding protein (A component, CbiO), a transmembrane protein (T component, CbiQ) and 2 possible substrate-capture proteins (S components, CbiM and CbiN) of unknown stoichimetry.

The protein localises to the cell membrane. Its pathway is cofactor biosynthesis; adenosylcobalamin biosynthesis. Part of the energy-coupling factor (ECF) transporter complex CbiMNOQ involved in cobalt import. This chain is Putative cobalt transport protein CbiM 2, found in Methanosarcina barkeri (strain Fusaro / DSM 804).